A 410-amino-acid polypeptide reads, in one-letter code: Formyl-CoA:oxalate CoA-transferase (410 aa).

Residues 18–19 (QS), 72–75 (LNTK), 96–98 (NFG), arginine 104, and 136–139 (KAYE) each bind CoA. The Nucleophile role is filled by aspartate 168. Residues 221–245 (PLAEYPNEDFGDEVPRSGNASGGGQ) form a disordered region. 243 to 245 (GGQ) is a binding site for substrate.

This sequence belongs to the CoA-transferase III family. Frc subfamily. Homodimer.

It catalyses the reaction formyl-CoA + oxalate = oxalyl-CoA + formate. The protein operates within metabolic intermediate degradation; oxalate degradation; CO(2) and formate from oxalate: step 1/2. Involved in the catabolism of oxalate and in the adapatation to low pH via the induction of the oxalate-dependent acid tolerance response (ATR). Catalyzes the transfer of the CoA moiety from formyl-CoA to oxalate. This is Formyl-CoA:oxalate CoA-transferase from Streptomyces coelicolor (strain ATCC BAA-471 / A3(2) / M145).